A 21-amino-acid polypeptide reads, in one-letter code: Snake venom serine protease jerdonase (21 aa).

The 21-residue stretch at 1-21 (IIGGDECNINEHPFLVALYDA) folds into the Peptidase S1 domain.

It belongs to the peptidase S1 family. Snake venom subfamily. In terms of assembly, monomer. Post-translationally, glycosylated; contains 35.8% neutral carbohydrate. As to expression, expressed by the venom gland.

Its subcellular location is the secreted. Its activity is regulated as follows. Inhibited by PMSF and soybean trypsin inhibitor. Partially inhibited by L-cysteine and DTT. Not affected by EDTA. Multifunctional venom serine protease that has fibrino(geno)lytic activity towards the A alpha-chain of human fibrinogen (FGA) and a slow activity towards the B beta-chain (FGB). Also hydrolyzes bovine low-molecular-mass kininogen and releases bradykinin. Catalyzes the hydrolysis of BAEE, S-2238 and S-2302. The chain is Snake venom serine protease jerdonase from Protobothrops jerdonii (Jerdon's pitviper).